The following is a 228-amino-acid chain: Cytochrome c oxidase subunit 2 (228 aa).

Over 1 to 14 (MAYPFQLGFQDATS) the chain is Mitochondrial intermembrane. Residues 15–45 (PIMEELLHFHDHTLMIVFLISSLVLYIISLM) form a helical membrane-spanning segment. Residues 46–59 (LTTKLTHTSTMDAQ) are Mitochondrial matrix-facing. The chain crosses the membrane as a helical span at residues 60-87 (EVETIWTILPAIILILIALPSLRILYMM). Residues 88-228 (DEINNPALTV…FEKWSTSMLT (141 aa)) lie on the Mitochondrial intermembrane side of the membrane. Cu cation is bound by residues His161, Cys196, Glu198, Cys200, His204, and Met207. Glu198 is a Mg(2+) binding site. Tyr218 is modified (phosphotyrosine).

Belongs to the cytochrome c oxidase subunit 2 family. As to quaternary structure, component of the cytochrome c oxidase (complex IV, CIV), a multisubunit enzyme composed of 14 subunits. The complex is composed of a catalytic core of 3 subunits MT-CO1, MT-CO2 and MT-CO3, encoded in the mitochondrial DNA, and 11 supernumerary subunits COX4I, COX5A, COX5B, COX6A, COX6B, COX6C, COX7A, COX7B, COX7C, COX8 and NDUFA4, which are encoded in the nuclear genome. The complex exists as a monomer or a dimer and forms supercomplexes (SCs) in the inner mitochondrial membrane with NADH-ubiquinone oxidoreductase (complex I, CI) and ubiquinol-cytochrome c oxidoreductase (cytochrome b-c1 complex, complex III, CIII), resulting in different assemblies (supercomplex SCI(1)III(2)IV(1) and megacomplex MCI(2)III(2)IV(2)). Found in a complex with TMEM177, COA6, COX18, COX20, SCO1 and SCO2. Interacts with TMEM177 in a COX20-dependent manner. Interacts with COX20. Interacts with COX16. The cofactor is Cu cation.

It localises to the mitochondrion inner membrane. The catalysed reaction is 4 Fe(II)-[cytochrome c] + O2 + 8 H(+)(in) = 4 Fe(III)-[cytochrome c] + 2 H2O + 4 H(+)(out). In terms of biological role, component of the cytochrome c oxidase, the last enzyme in the mitochondrial electron transport chain which drives oxidative phosphorylation. The respiratory chain contains 3 multisubunit complexes succinate dehydrogenase (complex II, CII), ubiquinol-cytochrome c oxidoreductase (cytochrome b-c1 complex, complex III, CIII) and cytochrome c oxidase (complex IV, CIV), that cooperate to transfer electrons derived from NADH and succinate to molecular oxygen, creating an electrochemical gradient over the inner membrane that drives transmembrane transport and the ATP synthase. Cytochrome c oxidase is the component of the respiratory chain that catalyzes the reduction of oxygen to water. Electrons originating from reduced cytochrome c in the intermembrane space (IMS) are transferred via the dinuclear copper A center (CU(A)) of subunit 2 and heme A of subunit 1 to the active site in subunit 1, a binuclear center (BNC) formed by heme A3 and copper B (CU(B)). The BNC reduces molecular oxygen to 2 water molecules using 4 electrons from cytochrome c in the IMS and 4 protons from the mitochondrial matrix. This chain is Cytochrome c oxidase subunit 2 (MT-CO2), found in Sus scrofa (Pig).